The primary structure comprises 408 residues: CinA-like protein (408 aa).

It belongs to the CinA family.

This Thermotoga neapolitana (strain ATCC 49049 / DSM 4359 / NBRC 107923 / NS-E) protein is CinA-like protein.